The primary structure comprises 1134 residues: DENN domain-containing protein 2B (1134 aa).

A compositionally biased stretch (polar residues) spans 1–13; the sequence is MTMTANKNSSITH. Positions 1–90 are disordered; the sequence is MTMTANKNSS…DPSPETSPPI (90 aa). A phosphoserine mark is found at serine 30 and serine 32. The segment covering 32–43 has biased composition (pro residues); the sequence is SPPPVLYPPRSP. Position 228 is a phosphothreonine (threonine 228). A Phosphoserine modification is found at serine 230. Disordered regions lie at residues 233–273 and 289–571; these read SYPE…GIRK and LKEQ…KRHS. Over residues 249–259 the composition is skewed to basic and acidic residues; it reads SLYRLEKRPGR. The segment covering 315–348 has biased composition (low complexity); that stretch reads GTLGTLEEPTGTASVSPSSRAGGVAGVAGEAGPP. Threonine 361 is modified (phosphothreonine). Phosphoserine is present on serine 365. A compositionally biased stretch (pro residues) spans 370 to 385; sequence LLPPKSSPDPAVNPVP. Residues 389 to 399 are compositionally biased toward basic and acidic residues; the sequence is RTFEYEADKNP. The span at 406–428 shows a compositional bias: pro residues; it reads GLPPSPTPAAPPPLPSTPAPPVT. Over residues 429-443 the composition is skewed to basic residues; sequence RRPKKDMRGHRKSQN. Residues 453–478 are compositionally biased toward polar residues; it reads SSLQSLYPSSPTENGTESQPKFGSKS. Residue threonine 479 is modified to Phosphothreonine. Polar residues-rich tracts occupy residues 511-521 and 542-555; these read KSQQLSENSLD and SLKSNSQSLRSGNW. Phosphoserine is present on serine 542. The segment covering 559–570 has biased composition (basic residues); that stretch reads KSHRLPRLPKRH. Residues serine 571 and serine 619 each carry the phosphoserine modification. Residues 633-658 form a disordered region; it reads LSMSSLETASLRDENSESESDSDDRF. One can recognise a uDENN domain in the interval 695-843; that stretch reads EYFVVVSLKK…PFPAPGKTIK (149 aa). Residues 865 to 998 enclose the cDENN domain; the sequence is RLEHVDFECL…LQAALEQALE (134 aa). In terms of domain architecture, dDENN spans 1000 to 1093; it reads KSELISQDSD…QDRELRKCRA (94 aa).

Interacts with ITSN1 and GRB2. Isoform 1 interacts with the SH3 domain of ABL1. Phosphorylated. Phosphorylation decreases ITSN1 binding.

It localises to the cytoplasm. Its subcellular location is the cell cortex. The protein resides in the cell membrane. The protein localises to the recycling endosome. Functionally, may be involved in cytoskeletal organization and tumorogenicity. Seems to be involved in a signaling transduction pathway leading to activation of MAPK1/ERK2. Plays a role in EGFR trafficking from recycling endosomes back to the cell membrane. In terms of biological role, guanine nucleotide exchange factor (GEF) which may activate RAB9A and RAB9B. Promotes the exchange of GDP to GTP, converting inactive GDP-bound Rab proteins into their active GTP-bound form. May block ERK2 activation stimulated by ABL1. May alter cell morphology and cell growth. The chain is DENN domain-containing protein 2B (Dennd2b) from Mus musculus (Mouse).